Consider the following 223-residue polypeptide: Serine/threonine/tyrosine-interacting protein (223 aa).

Residues 28 to 176 (EMQEVLPGLF…LQEYEAIYLA (149 aa)) enclose the Tyrosine-protein phosphatase domain. An Interaction with FBXW7 motif is present at residues 76–78 (FQQ). Phosphoserine is present on residues S184 and S201. The segment at 199–223 (TGSVKRTHEEDDDFGNMQVATAQNG) is disordered.

The protein belongs to the protein-tyrosine phosphatase family. Non-receptor class subfamily. Interacts with MAPK1; independently of MAPK1 phosphorylation status. Interacts with CARHSP1/Crhsp-24. Interacts (via FQQ motif) with FBXW7 (via F-box domain); the interaction is direct and prevents FBXW7 interaction with SKP1, a component of the SCF(FBXW7) complex. In terms of tissue distribution, widely expressed with highest levels in muscle, testis and brain. In testis, expression starts 13-14 days after birth and is limited to the seminiferous tubule and to round and elongating spermatids. Expression is low in condensing spermatids and pachytene spermatocytes, and absent in spermatogonia, spermatozoa and somatic Sertoli cells.

Its subcellular location is the nucleus. It is found in the cytoplasm. The protein localises to the cytosol. In terms of biological role, catalytically inactive phosphatase. Acts as a nuclear anchor for MAPK1/MAPK3 (ERK1/ERK2). Modulates cell-fate decisions and cell migration by spatiotemporal regulation of MAPK1/MAPK3 (ERK1/ERK2). By binding to the F-box of FBXW7, prevents the assembly of FBXW7 into the SCF E3 ubiquitin-protein ligase complex, and thereby inhibits degradation of its substrates. Plays a role in spermatogenesis. In Mus musculus (Mouse), this protein is Serine/threonine/tyrosine-interacting protein.